A 244-amino-acid polypeptide reads, in one-letter code: Phosphoadenosine 5'-phosphosulfate reductase (244 aa).

The active-site Nucleophile; cysteine thiosulfonate intermediate is Cys239.

Belongs to the PAPS reductase family. CysH subfamily.

The protein resides in the cytoplasm. It catalyses the reaction [thioredoxin]-disulfide + sulfite + adenosine 3',5'-bisphosphate + 2 H(+) = [thioredoxin]-dithiol + 3'-phosphoadenylyl sulfate. The protein operates within sulfur metabolism; hydrogen sulfide biosynthesis; sulfite from sulfate: step 3/3. Its function is as follows. Catalyzes the formation of sulfite from phosphoadenosine 5'-phosphosulfate (PAPS) using thioredoxin as an electron donor. This chain is Phosphoadenosine 5'-phosphosulfate reductase, found in Salmonella paratyphi A (strain AKU_12601).